Here is a 609-residue protein sequence, read N- to C-terminus: Hemagglutinin/proteinase (609 aa).

A signal peptide spans 1 to 24 (MKMIQRPLNWLVLAGAATGFPLYA). Residues 25-196 (AQMVTIDDAS…LDQWDGINHA (172 aa)) constitute a propeptide that is removed on maturation. Position 343 (histidine 343) interacts with Zn(2+). Glutamate 344 is a catalytic residue. 2 residues coordinate Zn(2+): histidine 347 and glutamate 367. The Proton donor role is filled by histidine 426.

Belongs to the peptidase M4 family. Zn(2+) is required as a cofactor.

The protein resides in the secreted. In terms of biological role, may play a role in the pathogenesis of cholera. Hap nicks and activates the A subunit of cholera enterotoxin and related enterotoxins. This Vibrio cholerae serotype O1 (strain ATCC 39315 / El Tor Inaba N16961) protein is Hemagglutinin/proteinase (hap).